Reading from the N-terminus, the 545-residue chain is CTP synthase (545 aa).

Residues 1–266 (MTTRYIFVTG…DELVVKRFGI (266 aa)) are amidoligase domain. S14 contacts CTP. S14 is a binding site for UTP. ATP contacts are provided by residues 15–20 (SLGKGI) and D72. Residues D72 and E140 each coordinate Mg(2+). Residues 147-149 (DIE), 187-192 (KTKPTQ), and K223 each bind CTP. UTP contacts are provided by residues 187–192 (KTKPTQ) and K223. Position 239-241 (239-241 (KDV)) interacts with ATP. Residues 291 to 542 (TIGMVGKYIE…VAAATAYQKR (252 aa)) enclose the Glutamine amidotransferase type-1 domain. L-glutamine is bound at residue G352. C379 functions as the Nucleophile; for glutamine hydrolysis in the catalytic mechanism. L-glutamine is bound by residues 380–383 (LGLQ), E403, and R470. Active-site residues include H515 and E517.

The protein belongs to the CTP synthase family. Homotetramer.

The enzyme catalyses UTP + L-glutamine + ATP + H2O = CTP + L-glutamate + ADP + phosphate + 2 H(+). The catalysed reaction is L-glutamine + H2O = L-glutamate + NH4(+). It carries out the reaction UTP + NH4(+) + ATP = CTP + ADP + phosphate + 2 H(+). Its pathway is pyrimidine metabolism; CTP biosynthesis via de novo pathway; CTP from UDP: step 2/2. With respect to regulation, allosterically activated by GTP, when glutamine is the substrate; GTP has no effect on the reaction when ammonia is the substrate. The allosteric effector GTP functions by stabilizing the protein conformation that binds the tetrahedral intermediate(s) formed during glutamine hydrolysis. Inhibited by the product CTP, via allosteric rather than competitive inhibition. Catalyzes the ATP-dependent amination of UTP to CTP with either L-glutamine or ammonia as the source of nitrogen. Regulates intracellular CTP levels through interactions with the four ribonucleotide triphosphates. The sequence is that of CTP synthase from Shewanella sediminis (strain HAW-EB3).